The sequence spans 433 residues: Protein root UVB sensitive 2, chloroplastic (433 aa).

The protein belongs to the RUS1 family. Interacts (via the DUF647 domain) with RUS1 (via the DUF647 domain). As to expression, expressed throughout the plant, with a higher expression near the root apical meristem, in the cortex region of the root elongation zone, in lateral roots and emerging lateral roots. Not detected in extreme root apical meristem or root cap.

The protein localises to the plastid. Involved in a root UV-B sensing pathway and in the protection against the hypersensitivity to very low-fluence-rate (VLF) UV-B. RSU1 and RUS2 are probably both negative modulators of the same UV-B perception pathway, which when overstimulated in the roots causes a block to postgermination development. Required for polar auxin transport and to maintain the normal levels of PIN proteins in the root. This chain is Protein root UVB sensitive 2, chloroplastic, found in Arabidopsis thaliana (Mouse-ear cress).